The chain runs to 474 residues: GTPase Der (474 aa).

2 consecutive EngA-type G domains span residues 2 to 166 and 212 to 385; these read LRIA…NVPE and LKIA…TTVS. GTP is bound by residues 8–15, 55–59, 118–121, 218–225, 265–269, and 330–333; these read GRPNVGKS, DTGGV, NKAD, DTAGL, and NKWD. The KH-like domain occupies 386–470; sequence SKVPTPVVNK…PFDLEFKEKT (85 aa).

This sequence belongs to the TRAFAC class TrmE-Era-EngA-EngB-Septin-like GTPase superfamily. EngA (Der) GTPase family. Associates with the 50S ribosomal subunit.

In terms of biological role, GTPase that plays an essential role in the late steps of ribosome biogenesis. This chain is GTPase Der, found in Chlamydia abortus (strain DSM 27085 / S26/3) (Chlamydophila abortus).